A 590-amino-acid polypeptide reads, in one-letter code: UvrABC system protein C (590 aa).

The GIY-YIG domain occupies 11–85; it reads ETPGVYLWKR…IKAHRPLYNV (75 aa). The region spanning 194-229 is the UVR domain; that stretch reads DGLLQELEAKMREAARRLEFERAAEIRDQMEALRAF.

It belongs to the UvrC family. In terms of assembly, interacts with UvrB in an incision complex.

It is found in the cytoplasm. The UvrABC repair system catalyzes the recognition and processing of DNA lesions. UvrC both incises the 5' and 3' sides of the lesion. The N-terminal half is responsible for the 3' incision and the C-terminal half is responsible for the 5' incision. This chain is UvrABC system protein C, found in Thermus thermophilus (strain ATCC 27634 / DSM 579 / HB8).